A 392-amino-acid chain; its full sequence is Branched-chain-amino-acid aminotransferase, mitochondrial (392 aa).

The transit peptide at 1–27 (MAAAALGQIWARKLLSVPWLLCGPRRY) directs the protein to the mitochondrion. Position 168 (Tyr-168) interacts with substrate. The residue at position 229 (Lys-229) is an N6-(pyridoxal phosphate)lysine. Lys-321 carries the post-translational modification N6-acetyllysine.

The protein belongs to the class-IV pyridoxal-phosphate-dependent aminotransferase family. As to quaternary structure, homodimer. Requires pyridoxal 5'-phosphate as cofactor. As to expression, ubiquitous.

The protein localises to the mitochondrion. The enzyme catalyses L-leucine + 2-oxoglutarate = 4-methyl-2-oxopentanoate + L-glutamate. It catalyses the reaction L-isoleucine + 2-oxoglutarate = (S)-3-methyl-2-oxopentanoate + L-glutamate. The catalysed reaction is L-valine + 2-oxoglutarate = 3-methyl-2-oxobutanoate + L-glutamate. Catalyzes the first reaction in the catabolism of the essential branched chain amino acids leucine, isoleucine, and valine. May also function as a transporter of branched chain alpha-keto acids. The chain is Branched-chain-amino-acid aminotransferase, mitochondrial (BCAT2) from Homo sapiens (Human).